A 69-amino-acid polypeptide reads, in one-letter code: Large ribosomal subunit protein bL31 (69 aa).

Residues Cys-16, Cys-18, Cys-37, and Cys-40 each coordinate Zn(2+).

It belongs to the bacterial ribosomal protein bL31 family. Type A subfamily. Part of the 50S ribosomal subunit. Requires Zn(2+) as cofactor.

Binds the 23S rRNA. This Syntrophotalea carbinolica (strain DSM 2380 / NBRC 103641 / GraBd1) (Pelobacter carbinolicus) protein is Large ribosomal subunit protein bL31.